Here is a 645-residue protein sequence, read N- to C-terminus: 1,4-alpha-glucan branching enzyme GlgB (645 aa).

The active-site Nucleophile is aspartate 309. The active-site Proton donor is the glutamate 352. Positions 619 to 645 (VKTRKGSKKQDGSKTKVRSNVTSRGKR) are disordered. A compositionally biased stretch (polar residues) spans 636–645 (RSNVTSRGKR).

Belongs to the glycosyl hydrolase 13 family. GlgB subfamily. As to quaternary structure, monomer.

The enzyme catalyses Transfers a segment of a (1-&gt;4)-alpha-D-glucan chain to a primary hydroxy group in a similar glucan chain.. Its pathway is glycan biosynthesis; glycogen biosynthesis. In terms of biological role, catalyzes the formation of the alpha-1,6-glucosidic linkages in glycogen by scission of a 1,4-alpha-linked oligosaccharide from growing alpha-1,4-glucan chains and the subsequent attachment of the oligosaccharide to the alpha-1,6 position. This is 1,4-alpha-glucan branching enzyme GlgB from Bacillus cereus (strain 03BB102).